Reading from the N-terminus, the 438-residue chain is tRNA modification GTPase MnmE (438 aa).

(6S)-5-formyl-5,6,7,8-tetrahydrofolate-binding residues include R20, E79, and K119. In terms of domain architecture, TrmE-type G spans 215-360 (GVEVAIVGPP…LEAALAARVG (146 aa)). GTP-binding positions include 225 to 230 (NAGKSS), 244 to 250 (SDEAGTT), and 269 to 272 (DTAG). Mg(2+)-binding residues include S229 and T250. K438 lines the (6S)-5-formyl-5,6,7,8-tetrahydrofolate pocket.

It belongs to the TRAFAC class TrmE-Era-EngA-EngB-Septin-like GTPase superfamily. TrmE GTPase family. As to quaternary structure, homodimer. Heterotetramer of two MnmE and two MnmG subunits. The cofactor is K(+).

It is found in the cytoplasm. Exhibits a very high intrinsic GTPase hydrolysis rate. Involved in the addition of a carboxymethylaminomethyl (cmnm) group at the wobble position (U34) of certain tRNAs, forming tRNA-cmnm(5)s(2)U34. The protein is tRNA modification GTPase MnmE of Parvibaculum lavamentivorans (strain DS-1 / DSM 13023 / NCIMB 13966).